The chain runs to 505 residues: Alpha-1-syntrophin (505 aa).

Disordered regions lie at residues 1–24 and 40–75; these read MASG…AGAG and LTVS…AAPP. 2 consecutive PH domains span residues 6–269 and 293–401; these read RAPR…AQIN and DIKQ…DGCH. Positions 9 to 18 are enriched in low complexity; sequence RTGLLELRAG. A PDZ domain is found at 87–170; the sequence is RVTVRKADAG…EVVLEVKYMK (84 aa). Residues Ser101, Ser184, Ser189, Ser193, and Ser200 each carry the phosphoserine modification. Positions 183-212 are disordered; sequence TSVGWDSPPASPLQRQPSSPGPQTRNLSEA. Residues 195-209 are compositionally biased toward polar residues; it reads LQRQPSSPGPQTRNL. An SU domain is found at 449-505; sequence PFEKLQMSSDDGASLLFLDFGGAEGEIQLDLHSCPKTMVFIIHSFLSAKVTRLGLLA. The interval 483–505 is calmodulin-binding; the sequence is PKTMVFIIHSFLSAKVTRLGLLA.

This sequence belongs to the syntrophin family. In terms of assembly, monomer and homodimer. Interacts with the dystrophin related protein DTNA; SGCG of the dystrophin glycoprotein complex; NOS1; GRB2; GA; TGFA; MAPK12 and the sodium channel proteins SCN4A and SCN5A. Interacts with the dystrophin protein DMD in a calmodulin dependent manner and with related protein UTRN; SGCA of the dystrophin glycoprotein complex; F-actin; calmodulin and with the other members of the syntrophin family SNTB1 and SNTB2. Interacts with MYOC; regulates muscle hypertrophy. Interacts with DTNB. Post-translationally, phosphorylated by CaM-kinase II. Phosphorylation may inhibit the interaction with DMD. In terms of tissue distribution, highly expressed in skeletal and cardiac muscle and is also detected in brain.

It localises to the cell membrane. It is found in the sarcolemma. The protein resides in the cell junction. The protein localises to the cytoplasm. Its subcellular location is the cytoskeleton. Adapter protein that binds to and probably organizes the subcellular localization of a variety of membrane proteins. May link various receptors to the actin cytoskeleton and the extracellular matrix via dystrophin glycoprotein complex. Plays an important role in synapse formation and in the organization of UTRN and acetylcholine receptors at the neuromuscular synapse. Binds to phosphatidylinositol 4,5-bisphosphate. The polypeptide is Alpha-1-syntrophin (SNTA1) (Oryctolagus cuniculus (Rabbit)).